Here is a 344-residue protein sequence, read N- to C-terminus: tRNA N6-adenosine threonylcarbamoyltransferase (344 aa).

2 residues coordinate Fe cation: His-112 and His-116. Residues Leu-134–Gly-138, Asp-167, Gly-180, and Asn-280 contribute to the substrate site. Asp-308 contacts Fe cation.

This sequence belongs to the KAE1 / TsaD family. It depends on Fe(2+) as a cofactor.

It is found in the cytoplasm. The catalysed reaction is L-threonylcarbamoyladenylate + adenosine(37) in tRNA = N(6)-L-threonylcarbamoyladenosine(37) in tRNA + AMP + H(+). In terms of biological role, required for the formation of a threonylcarbamoyl group on adenosine at position 37 (t(6)A37) in tRNAs that read codons beginning with adenine. Is involved in the transfer of the threonylcarbamoyl moiety of threonylcarbamoyl-AMP (TC-AMP) to the N6 group of A37, together with TsaE and TsaB. TsaD likely plays a direct catalytic role in this reaction. The chain is tRNA N6-adenosine threonylcarbamoyltransferase from Rickettsia peacockii (strain Rustic).